The primary structure comprises 387 residues: GTPase Obg (387 aa).

The Obg domain occupies 1-159 (MKFVDEAIIR…RSLKLELLLL (159 aa)). The OBG-type G domain occupies 160 to 333 (ADVGLLGMPN…LAVKLLDFIA (174 aa)). GTP is bound by residues 166-173 (GMPNAGKS), 191-195 (FTTLV), 213-216 (DIPG), 283-286 (NKAD), and 314-316 (SAY). Mg(2+)-binding residues include Ser173 and Thr193.

The protein belongs to the TRAFAC class OBG-HflX-like GTPase superfamily. OBG GTPase family. As to quaternary structure, monomer. Mg(2+) serves as cofactor.

Its subcellular location is the cytoplasm. In terms of biological role, an essential GTPase which binds GTP, GDP and possibly (p)ppGpp with moderate affinity, with high nucleotide exchange rates and a fairly low GTP hydrolysis rate. Plays a role in control of the cell cycle, stress response, ribosome biogenesis and in those bacteria that undergo differentiation, in morphogenesis control. The polypeptide is GTPase Obg (Shewanella halifaxensis (strain HAW-EB4)).